The following is a 607-amino-acid chain: Guanine nucleotide-binding protein-like 1 (607 aa).

The span at 1–14 shows a compositional bias: basic residues; that stretch reads MPRKKPFSVKQKKK. Residues 1-81 form a disordered region; sequence MPRKKPFSVK…GPRGYDPNRY (81 aa). Basic and acidic residues predominate over residues 15–26; sequence QLQDKRERKRGL. 3 positions are modified to phosphoserine: S32, S33, and S34. Residues T48 and T50 each carry the phosphothreonine modification. Residues S51 and S68 each carry the phosphoserine modification. The CP-type G domain occupies 178-418; it reads WRQLWRVLEM…LCDCPGLIFP (241 aa). Residue 225–228 participates in GTP binding; that stretch reads NKVD. S324 carries the phosphoserine modification. GTP-binding positions include 367–374 and 411–415; these read GFPNVGKS and DCPGL. The interval 547–607 is disordered; that stretch reads GPAGDEEEEE…PYALLGEDEC (61 aa). Acidic residues predominate over residues 550 to 584; it reads GDEEEEEEEELSSSCEEEGEEDRDADEEGEGDEET. Phosphoserine occurs at positions 561, 562, and 563.

Belongs to the TRAFAC class YlqF/YawG GTPase family.

Functionally, possible regulatory or functional link with the histocompatibility cluster. The chain is Guanine nucleotide-binding protein-like 1 (GNL1) from Homo sapiens (Human).